We begin with the raw amino-acid sequence, 883 residues long: Pre-mRNA-splicing factor syf1 homolog (883 aa).

HAT repeat units lie at residues 13–45 (INFE…HKAK), 46–78 (APNN…TRRK), 88–120 (PMYE…FMTS), 122–156 (CKIT…FVRR), 158–190 (EMPE…EADR), 268–303 (GLFD…FEEL), 368–406 (DKPA…FYEA), 463–495 (KRKI…LEES), 531–565 (NYFE…KFLE), 570–604 (TKLE…LEEE), 642–676 (YGLP…LETK), and 678–712 (GEVD…FEVR). 2 disordered regions span residues 794-851 (RGET…DEEG) and 864-883 (IPAK…SDGE). Positions 812 to 834 (DEIDIGDSDEDDEEEDDDEENEM) are enriched in acidic residues. Composition is skewed to polar residues over residues 835 to 844 (TNENQASAAV) and 873 to 883 (KPSNQGDSDGE).

Belongs to the crooked-neck family. Component of the NTC(Nineteen)/Prp19 complex composed of at least fand, Prp19,CG9667/ISY1 and Cdc5/CDC5L. Within the complex, interacts with Prp19 and ISY1/CG9667.

The protein resides in the nucleus. Its function is as follows. Subunit of the NTC(Nineteen)/Prp19 complex, which is part of the spliceosome. The complex participates in spliceosome assembly, its remodeling and is required for efficient spliceosome activation. Essential for efficient pre-mRNA splicing. In embryos, efficient pre-mRNA splicing of zygotic transcripts is essential during dynamic cellular processes that require rapid division and/or dramatic changes in gene expression such as blastoderm cellularization, tracheal branching morphogenesis, Malpighian morphogenesis and epidermal development. Part of its role in promoting embryo tracheal development is also due to specifically splicing bnl transcripts which results in the activation of the BNL-FGF pathway. The sequence is that of Pre-mRNA-splicing factor syf1 homolog from Drosophila melanogaster (Fruit fly).